A 985-amino-acid chain; its full sequence is Thioredoxin domain-containing protein 11 (985 aa).

Residues 1–11 are compositionally biased toward gly residues; it reads MSECGGRGGGS. Residues 1-38 are disordered; that stretch reads MSECGGRGGGSSSSEDAEDEGGGGGGPAGSDCLSSSPT. Residues 29 to 38 are compositionally biased toward low complexity; it reads GSDCLSSSPT. The chain crosses the membrane as a helical span at residues 65 to 85; it reads LLCGAVALGCALLLALKFTCS. Positions 92 to 214 constitute a Thioredoxin 1 domain; it reads IPAKPPVSFF…IEKFVRRVMK (123 aa). 2 disulfide bridges follow: C469–C472 and C719–C722. One can recognise a Thioredoxin 2 domain in the interval 649–799; the sequence is LDPKQALMKL…LLRFILHHSD (151 aa). Residues 821 to 919 adopt a coiled-coil conformation; sequence VLQRGHISHL…ASENLLTENT (99 aa). S828 is subject to Phosphoserine. The interval 935-985 is disordered; that stretch reads RDGAESLAAQREVHPKQPEPSATPQLPGSSPPPANVSATLVSERNKENRTD.

This sequence belongs to the protein disulfide isomerase family. In terms of assembly, interacts with the cytoplasmic part of DUOX1 and DUOX2. Interacts with TPO and CYBA. Widely expressed at low level. Expressed at higher level in thyroid and prostate.

The protein resides in the endoplasmic reticulum membrane. In terms of biological role, may act as a redox regulator involved in DUOX proteins folding. The interaction with DUOX1 and DUOX2 suggest that it belongs to a multiprotein complex constituting the thyroid H(2)O(2) generating system. It is however not sufficient to assist DUOX1 and DUOX2 in H(2)O(2) generation. The sequence is that of Thioredoxin domain-containing protein 11 (TXNDC11) from Homo sapiens (Human).